We begin with the raw amino-acid sequence, 359 residues long: Halocin-H4 (359 aa).

A signal peptide spans 1 to 46; it reads MSKDRDGRRTSRRGTLKKIGGFSLGALSFGAVGRTQAATGSSVTTA. Disordered stretches follow at residues 40–59 and 340–359; these read GSSV…DPKS and IPDR…SRKQ.

It is found in the secreted. Functionally, has antibacterial activity against other haloarchaeons. Interacts with the membrane of the target cells where it causes permeability changes that result in an ionic imbalance leading to cell lysis and death. The sequence is that of Halocin-H4 (halH4) from Haloferax mediterranei (strain ATCC 33500 / DSM 1411 / JCM 8866 / NBRC 14739 / NCIMB 2177 / R-4) (Halobacterium mediterranei).